The chain runs to 100 residues: Colipase-like protein 2 (100 aa).

The signal sequence occupies residues 1–21; the sequence is MAAALALVAGVLSGAVLPLWS. Intrachain disulfides connect cysteine 34–cysteine 45, cysteine 40–cysteine 56, cysteine 44–cysteine 78, cysteine 66–cysteine 86, and cysteine 80–cysteine 97.

Belongs to the colipase family.

The protein resides in the secreted. The sequence is that of Colipase-like protein 2 (CLPSL2) from Homo sapiens (Human).